The chain runs to 377 residues: uncharacterized protein (377 aa).

10 consecutive transmembrane segments (helical) span residues 4–24, 41–61, 85–105, 134–154, 159–179, 192–212, 278–298, 301–321, 327–347, and 356–376; these read LLTP…LLGT, ASFG…FPIT, IAAL…FLFG, FHAM…IATV, VYVH…PFLL, GAVG…IALA, VFGI…AGFV, GVGY…DLVV, IASV…AIGL, and LCFF…PVLK.

It to R.meliloti MosC.

The protein localises to the cell membrane. Functionally, could be involved in a transport system. This is an uncharacterized protein from Sinorhizobium fredii (strain NBRC 101917 / NGR234).